A 157-amino-acid chain; its full sequence is MNINFTLISQAIAFSLFILFTARFVWPYLLRAIEERQQKIADGLAAGERGKKELELASQRSSEVLKEAKQRASEIVIQAEKRASDIIEEAKQNARIEGEKIIAGAKAEIQHETFSARESLRQQVAGLAVQGASKILRREVNAKVHADLLASIEAELK.

A helical membrane pass occupies residues 7–29 (LISQAIAFSLFILFTARFVWPYL).

This sequence belongs to the ATPase B chain family. F-type ATPases have 2 components, F(1) - the catalytic core - and F(0) - the membrane proton channel. F(1) has five subunits: alpha(3), beta(3), gamma(1), delta(1), epsilon(1). F(0) has three main subunits: a(1), b(2) and c(10-14). The alpha and beta chains form an alternating ring which encloses part of the gamma chain. F(1) is attached to F(0) by a central stalk formed by the gamma and epsilon chains, while a peripheral stalk is formed by the delta and b chains.

It is found in the cell inner membrane. In terms of biological role, f(1)F(0) ATP synthase produces ATP from ADP in the presence of a proton or sodium gradient. F-type ATPases consist of two structural domains, F(1) containing the extramembraneous catalytic core and F(0) containing the membrane proton channel, linked together by a central stalk and a peripheral stalk. During catalysis, ATP synthesis in the catalytic domain of F(1) is coupled via a rotary mechanism of the central stalk subunits to proton translocation. Its function is as follows. Component of the F(0) channel, it forms part of the peripheral stalk, linking F(1) to F(0). The sequence is that of ATP synthase subunit b from Nitrosomonas europaea (strain ATCC 19718 / CIP 103999 / KCTC 2705 / NBRC 14298).